Consider the following 117-residue polypeptide: Immunoglobulin heavy variable 1-24 (117 aa).

The N-terminal stretch at 1–19 (MDCTWRILFLVAAATGTHA) is a signal peptide. Residues 20 to 44 (QVQLVQSGAEVKKPGASVKVSCKVS) form a framework-1 region. The 98-residue stretch at 20–117 (QVQLVQSGAE…EDTAVYYCAT (98 aa)) folds into the Ig-like domain. Cysteine 41 and cysteine 115 form a disulfide bridge. Residues 45–52 (GYTLTELS) are complementarity-determining-1. Positions 53–69 (MHWVRQAPGKGLEWMGG) are framework-2. The segment at 70 to 77 (FDPEDGET) is complementarity-determining-2. The segment at 78-115 (IYAQKFQGRVTMTEDTSTDTAYMELSSLRSEDTAVYYC) is framework-3. Positions 116–117 (AT) are complementarity-determining-3.

Immunoglobulins are composed of two identical heavy chains and two identical light chains; disulfide-linked.

The protein resides in the secreted. It localises to the cell membrane. V region of the variable domain of immunoglobulin heavy chains that participates in the antigen recognition. Immunoglobulins, also known as antibodies, are membrane-bound or secreted glycoproteins produced by B lymphocytes. In the recognition phase of humoral immunity, the membrane-bound immunoglobulins serve as receptors which, upon binding of a specific antigen, trigger the clonal expansion and differentiation of B lymphocytes into immunoglobulins-secreting plasma cells. Secreted immunoglobulins mediate the effector phase of humoral immunity, which results in the elimination of bound antigens. The antigen binding site is formed by the variable domain of one heavy chain, together with that of its associated light chain. Thus, each immunoglobulin has two antigen binding sites with remarkable affinity for a particular antigen. The variable domains are assembled by a process called V-(D)-J rearrangement and can then be subjected to somatic hypermutations which, after exposure to antigen and selection, allow affinity maturation for a particular antigen. In Homo sapiens (Human), this protein is Immunoglobulin heavy variable 1-24.